The sequence spans 161 residues: Shikimate kinase (161 aa).

10 to 15 (GAGKTT) is an ATP binding site. Thr14 lines the Mg(2+) pocket. Residues Asp28, Arg52, and Gly74 each coordinate substrate. Arg114 lines the ATP pocket. Position 132 (Arg132) interacts with substrate.

The protein belongs to the shikimate kinase family. Monomer. Mg(2+) is required as a cofactor.

It localises to the cytoplasm. The enzyme catalyses shikimate + ATP = 3-phosphoshikimate + ADP + H(+). The protein operates within metabolic intermediate biosynthesis; chorismate biosynthesis; chorismate from D-erythrose 4-phosphate and phosphoenolpyruvate: step 5/7. Functionally, catalyzes the specific phosphorylation of the 3-hydroxyl group of shikimic acid using ATP as a cosubstrate. This is Shikimate kinase from Streptococcus gordonii (strain Challis / ATCC 35105 / BCRC 15272 / CH1 / DL1 / V288).